Reading from the N-terminus, the 1487-residue chain is Protein cft1 (1487 aa).

The span at 486-504 shows a compositional bias: acidic residues; that stretch reads DLDLDDEDLEDDDDDDLYG. The disordered stretch occupies residues 486-513; the sequence is DLDLDDEDLEDDDDDDLYGEESASPEQA.

It belongs to the CFT1 family.

It is found in the nucleus. Functionally, RNA-binding component of the cleavage and polyadenylation factor (CPF) complex, which plays a key role in polyadenylation-dependent pre-mRNA 3'-end formation and cooperates with cleavage factors including the CFIA complex and hrp1/CFIB. Involved in poly(A) site recognition. May be involved in coupling transcription termination and mRNA 3'-end formation. The sequence is that of Protein cft1 (paa-3) from Neurospora crassa (strain ATCC 24698 / 74-OR23-1A / CBS 708.71 / DSM 1257 / FGSC 987).